The following is a 107-amino-acid chain: Putative double-stranded DNA mimic protein HS_0995 (107 aa).

This sequence belongs to the putative dsDNA mimic protein family.

In terms of biological role, may act as a double-stranded DNA (dsDNA) mimic. Probably regulates the activity of a dsDNA-binding protein. The polypeptide is Putative double-stranded DNA mimic protein HS_0995 (Histophilus somni (strain 129Pt) (Haemophilus somnus)).